The chain runs to 259 residues: HTH-type transcriptional regulator Rv1931c (259 aa).

Residues 104 to 121 (SHRRHRPRAGTGRRRPRH) are compositionally biased toward basic residues. The tract at residues 104-170 (SHRRHRPRAG…GAGGHRGRAG (67 aa)) is disordered. In terms of domain architecture, HTH araC/xylS-type spans 174–257 (RIGELAQRAA…GISPDQYRKA (84 aa)). 2 consecutive DNA-binding regions (H-T-H motif) follow at residues 176-197 (GELA…SDEV) and 224-247 (VVAI…IRRV).

Its function is as follows. Controls the expression of genes important for virulence. The sequence is that of HTH-type transcriptional regulator Rv1931c from Mycobacterium tuberculosis (strain ATCC 25618 / H37Rv).